Here is a 299-residue protein sequence, read N- to C-terminus: Protoheme IX farnesyltransferase (299 aa).

A run of 9 helical transmembrane segments spans residues 26–46 (VNAL…PDGL), 53–73 (FAAT…NCLI), 94–114 (LHSV…LSVL), 121–141 (LTMW…TLLL), 149–169 (IVIG…AVSG), 175–195 (ALLL…SLAL), 217–239 (YTRL…PFAI), 243–265 (GWIY…WRLL), and 277–297 (FRFS…DHYL).

It belongs to the UbiA prenyltransferase family. Protoheme IX farnesyltransferase subfamily.

It localises to the cell inner membrane. It catalyses the reaction heme b + (2E,6E)-farnesyl diphosphate + H2O = Fe(II)-heme o + diphosphate. The protein operates within porphyrin-containing compound metabolism; heme O biosynthesis; heme O from protoheme: step 1/1. Converts heme B (protoheme IX) to heme O by substitution of the vinyl group on carbon 2 of heme B porphyrin ring with a hydroxyethyl farnesyl side group. The polypeptide is Protoheme IX farnesyltransferase (Azoarcus sp. (strain BH72)).